The chain runs to 339 residues: Methionine import ATP-binding protein MetN 2 (339 aa).

Residues 2 to 241 (ISFNNVSKVY…PKTKTTQNFV (240 aa)) form the ABC transporter domain. Residue 38–45 (GFSGAGKS) coordinates ATP.

The protein belongs to the ABC transporter superfamily. Methionine importer (TC 3.A.1.24) family. In terms of assembly, the complex is composed of two ATP-binding proteins (MetN), two transmembrane proteins (MetI) and a solute-binding protein (MetQ).

The protein resides in the cell membrane. The catalysed reaction is L-methionine(out) + ATP + H2O = L-methionine(in) + ADP + phosphate + H(+). The enzyme catalyses D-methionine(out) + ATP + H2O = D-methionine(in) + ADP + phosphate + H(+). Its function is as follows. Part of the ABC transporter complex MetNIQ involved in methionine import. Responsible for energy coupling to the transport system. The protein is Methionine import ATP-binding protein MetN 2 of Bacillus cereus (strain ATCC 10987 / NRS 248).